Here is an 896-residue protein sequence, read N- to C-terminus: Rho GTPase-activating protein gacM (896 aa).

Residues 1–97 are disordered; sequence MSSFIGWKKN…SSNDTIGKSS (97 aa). Residues 10–26 show a composition bias toward low complexity; that stretch reads NSNSGGTPGASPTSSSP. Positions 27–38 are enriched in polar residues; it reads LNSTISNANSVS. Composition is skewed to low complexity over residues 45–57 and 65–97; these read SISN…LSSS and NSNN…GKSS. In terms of domain architecture, Rho-GAP spans 139 to 330; sequence QPINPNTEFG…LWIEEFDMIS (192 aa). Low complexity-rich tracts occupy residues 375 to 391, 400 to 427, 448 to 460, and 473 to 506; these read IQQQ…QSHP, SSLS…LLPT, PTPT…TPQT, and NNNS…NNNN. 2 disordered regions span residues 375–514 and 701–770; these read IQQQ…GSPL and LPTG…ENQI. Residues 702–711 are compositionally biased toward polar residues; the sequence is PTGSSWSDFE. 2 stretches are compositionally biased toward low complexity: residues 712–743 and 751–761; these read NNSS…NSSP and SNGLNSSSNSN.

The protein resides in the cytoplasm. Its function is as follows. Rho GTPase-activating protein involved in the signal transduction pathway. In Dictyostelium discoideum (Social amoeba), this protein is Rho GTPase-activating protein gacM (gacM).